A 364-amino-acid chain; its full sequence is tRNA 2-selenouridine synthase (364 aa).

A Rhodanese domain is found at 14–137; that stretch reads LIADTPIIDV…LRQTAIQATI (124 aa). The active-site S-selanylcysteine intermediate is cysteine 97.

The protein belongs to the SelU family. In terms of assembly, monomer.

It carries out the reaction 5-methylaminomethyl-2-thiouridine(34) in tRNA + selenophosphate + (2E)-geranyl diphosphate + H2O + H(+) = 5-methylaminomethyl-2-selenouridine(34) in tRNA + (2E)-thiogeraniol + phosphate + diphosphate. It catalyses the reaction 5-methylaminomethyl-2-thiouridine(34) in tRNA + (2E)-geranyl diphosphate = 5-methylaminomethyl-S-(2E)-geranyl-thiouridine(34) in tRNA + diphosphate. The enzyme catalyses 5-methylaminomethyl-S-(2E)-geranyl-thiouridine(34) in tRNA + selenophosphate + H(+) = 5-methylaminomethyl-2-(Se-phospho)selenouridine(34) in tRNA + (2E)-thiogeraniol. The catalysed reaction is 5-methylaminomethyl-2-(Se-phospho)selenouridine(34) in tRNA + H2O = 5-methylaminomethyl-2-selenouridine(34) in tRNA + phosphate. Its function is as follows. Involved in the post-transcriptional modification of the uridine at the wobble position (U34) of tRNA(Lys), tRNA(Glu) and tRNA(Gln). Catalyzes the conversion of 2-thiouridine (S2U-RNA) to 2-selenouridine (Se2U-RNA). Acts in a two-step process involving geranylation of 2-thiouridine (S2U) to S-geranyl-2-thiouridine (geS2U) and subsequent selenation of the latter derivative to 2-selenouridine (Se2U) in the tRNA chain. This is tRNA 2-selenouridine synthase from Shigella flexneri serotype 5b (strain 8401).